The sequence spans 84 residues: MANHKSSLKRIRQEEKRRLHNRYYAKTMRNTVKKLRATTDKAEAVAMYPGVQKMLDKLAKTNIIHKNKAANLKSKLAAYISKLA.

The protein belongs to the bacterial ribosomal protein bS20 family.

Functionally, binds directly to 16S ribosomal RNA. This Phocaeicola vulgatus (strain ATCC 8482 / DSM 1447 / JCM 5826 / CCUG 4940 / NBRC 14291 / NCTC 11154) (Bacteroides vulgatus) protein is Small ribosomal subunit protein bS20.